We begin with the raw amino-acid sequence, 3527 residues long: BEACH domain-containing protein A2 (3527 aa).

3 disordered regions span residues 25–46, 385–423, and 454–490; these read AGEA…PSSS, SSPH…LNSR, and ESSG…CEQG. The segment covering 28–46 has biased composition (low complexity); it reads AISDPTTPPSSSQASPSSS. Residues 455 to 469 are compositionally biased toward low complexity; that stretch reads SSGTSTSLLSQTKLT. The segment covering 472–481 has biased composition (polar residues); it reads SRRQTPSANN. 5 LRR repeats span residues 1447–1470, 1499–1522, 1542–1565, 1566–1588, and 2001–2024; these read KLES…NYED, FSHL…VLSN, SIQI…SHNL, AILR…DVEV, and SSEM…SRSS. Disordered stretches follow at residues 1992–2023 and 2046–2081; these read GDHV…DSRS and IPSP…SQGS. A compositionally biased stretch (polar residues) spans 1998–2020; it reads VSASSEMKSLDLTGSSSQVQPID. 3 LRR repeats span residues 2128-2151, 2221-2247, and 2313-2336; these read TEQI…VDPE, LLSI…LLSI, and VSAV…LDTD. The segment at 2658–2680 is disordered; that stretch reads VNTDEKSETGSPIKSSSGKMDEI. The segment covering 2666–2675 has biased composition (polar residues); the sequence is TGSPIKSSSG. The 168-residue stretch at 2704–2871 folds into the BEACH-type PH domain; sequence EHLEKIRFRY…EREEVFRNLL (168 aa). The BEACH domain occupies 2896 to 3188; the sequence is GSRLFKLMAK…QLFQKPHVKR (293 aa). WD repeat units follow at residues 3272-3311, 3322-3361, 3410-3451, and 3483-3522; these read HEGN…PRGS, AHTA…FVRQ, DLIV…DPVS, and FHKQ…LKAS.

The chain is BEACH domain-containing protein A2 from Arabidopsis thaliana (Mouse-ear cress).